The sequence spans 69 residues: Alpha-elapitoxin-Lc2c (69 aa).

Disulfide bonds link Cys3–Cys20, Cys13–Cys41, Cys45–Cys56, and Cys57–Cys62.

Belongs to the three-finger toxin family. Long-chain subfamily. Type II alpha-neurotoxin sub-subfamily. As to expression, expressed by the venom gland.

The protein resides in the secreted. In terms of biological role, binds with high affinity to muscular nicotinic acetylcholine receptors (nAChRs), whereas it binds with a low affinity to neuronal alpha-7/CHRNA7 nAChRs. This chain is Alpha-elapitoxin-Lc2c, found in Laticauda colubrina (Yellow-lipped sea krait).